Here is a 545-residue protein sequence, read N- to C-terminus: Resolvase homolog YokA (545 aa).

The region spanning 14–165 (NILGYLRRSR…GAKYTYAAQG (152 aa)) is the Resolvase/invertase-type recombinase catalytic domain. Residues 19–46 (LRRSRQDMEREKRTGEDTLTEQKELMNK) adopt a coiled-coil conformation. Ser22 acts as the O-(5'-phospho-DNA)-serine intermediate in catalysis. The segment at residues 173–303 (PYGYQLNKKT…VKIANKVPLL (131 aa)) is a DNA-binding region (recombinase). Residues 402 to 475 (NMKTKKQMSE…QDTQSEIDSN (74 aa)) adopt a coiled-coil conformation.

This sequence in the N-terminal section; belongs to the site-specific recombinase resolvase family.

This chain is Resolvase homolog YokA (yokA), found in Bacillus subtilis (strain 168).